Here is a 182-residue protein sequence, read N- to C-terminus: Lipoprotein signal peptidase (182 aa).

3 helical membrane-spanning segments follow: residues 12–32 (VAVFACVAAAALIVDQLTKAW), 68–88 (ATWVISLLAVVACVALAVAGV), and 91–111 (VSMKWSVAISFAFAGALGNLI). Active-site residues include aspartate 127 and aspartate 140. A helical transmembrane segment spans residues 135–155 (VGNVADIYLVVAGVVLVILIL).

It belongs to the peptidase A8 family.

The protein localises to the cell membrane. It catalyses the reaction Release of signal peptides from bacterial membrane prolipoproteins. Hydrolyzes -Xaa-Yaa-Zaa-|-(S,diacylglyceryl)Cys-, in which Xaa is hydrophobic (preferably Leu), and Yaa (Ala or Ser) and Zaa (Gly or Ala) have small, neutral side chains.. Its pathway is protein modification; lipoprotein biosynthesis (signal peptide cleavage). Its function is as follows. This protein specifically catalyzes the removal of signal peptides from prolipoproteins. The sequence is that of Lipoprotein signal peptidase from Bifidobacterium longum (strain DJO10A).